Here is a 349-residue protein sequence, read N- to C-terminus: UDP-glucose 4-epimerase (349 aa).

NAD(+) contacts are provided by residues 10–12, 31–35, 66–67, and K92; these read GFI, DNFAN, and DV. 132 to 134 serves as a coordination point for substrate; that stretch reads SAT. The active-site Proton acceptor is Y158. Residues K162 and Y186 each contribute to the NAD(+) site. Substrate is bound by residues 186 to 188, 207 to 209, 225 to 227, R240, and 303 to 306; these read YFN, NNL, TIY, and RPGD.

This sequence belongs to the NAD(P)-dependent epimerase/dehydratase family. It depends on NAD(+) as a cofactor. As to expression, expressed in gonads, vulva, intestine, hypdermis and nervous system.

The catalysed reaction is UDP-alpha-D-glucose = UDP-alpha-D-galactose. The enzyme catalyses UDP-N-acetyl-alpha-D-glucosamine = UDP-N-acetyl-alpha-D-galactosamine. It functions in the pathway carbohydrate metabolism; galactose metabolism. In terms of biological role, catalyzes two distinct but analogous reactions: the reversible epimerization of UDP-glucose to UDP-galactose and the reversible epimerization of UDP-N-acetylglucosamine to UDP-N-acetylgalactosamine. The reaction with UDP-Gal plays a critical role in the Leloir pathway of galactose catabolism in which galactose is converted to the glycolytic intermediate glucose 6-phosphate. It contributes to the catabolism of dietary galactose and enables the endogenous biosynthesis of both UDP-Gal and UDP-GalNAc when exogenous sources are limited. Both UDP-sugar interconversions are important for the synthesis of glycoproteins and glycolipids. The protein is UDP-glucose 4-epimerase of Caenorhabditis elegans.